The following is a 165-amino-acid chain: Cystatin-like protein (165 aa).

The first 19 residues, 1-19, serve as a signal peptide directing secretion; the sequence is MDVALKLLLLAALTLLASA. Disulfide bonds link Cys80–Cys92 and Cys104–Cys118.

Functionally, involved in hypoxia tolerance. The sequence is that of Cystatin-like protein from Clarias batrachus (Walking catfish).